Consider the following 280-residue polypeptide: Nocamycin O-methyltransferase (280 aa).

The protein belongs to the methyltransferase superfamily.

It carries out the reaction nocamycin E + S-adenosyl-L-methionine = nocamycin I + S-adenosyl-L-homocysteine. The protein operates within antibiotic biosynthesis. Involved in the biosynthesis of nocamycin I and nocamycin II. Catalyzes the methylation of nocamycin E to yield nocamycin I. The polypeptide is Nocamycin O-methyltransferase (Saccharothrix syringae (Nocardiopsis syringae)).